Here is a 116-residue protein sequence, read N- to C-terminus: Protein Rev (116 aa).

Position 5 is a phosphoserine; by host CK2 (Ser-5). A homomultimerization region spans residues 18-26 (YIKILYQSN). The Nuclear localization signal and RNA-binding (RRE) motif lies at 34–50 (TRKARRNRRRRWRARQR). A Nuclear export signal and binding to XPO1 motif is present at residues 73-84 (LQLPLLEKLHIN). Residues 90–116 (GQGTEKGVGSPQISVESRAVLGSGTKE) are disordered. Ser-99 carries the phosphoserine; by host modification.

This sequence belongs to the HIV-1 REV protein family. In terms of assembly, homomultimer; when bound to the RRE. Multimeric assembly is essential for activity and may involve XPO1. Binds to human KPNB1, XPO1, TNPO1, RANBP5 and IPO7. Interacts with the viral Integrase. Interacts with human KHDRBS1. Interacts with human NAP1; this interaction decreases Rev multimerization and stimulates its activity. Interacts with human DEAD-box helicases DDX3 and DDX24; these interactions may serve for viral RNA export to the cytoplasm and packaging, respectively. Interacts with human PSIP1; this interaction may inhibit HIV-1 DNA integration by promoting dissociation of the Integrase-LEDGF/p75 complex. Asymmetrically arginine dimethylated at one site by host PRMT6. Methylation impairs the RNA-binding activity and export of viral RNA from the nucleus to the cytoplasm. In terms of processing, phosphorylated by protein kinase CK2. Presence of, and maybe binding to the N-terminus of the regulatory beta subunit of CK2 is necessary for CK2-mediated Rev's phosphorylation.

It localises to the host nucleus. The protein resides in the host nucleolus. Its subcellular location is the host cytoplasm. Its function is as follows. Escorts unspliced or incompletely spliced viral pre-mRNAs (late transcripts) out of the nucleus of infected cells. These pre-mRNAs carry a recognition sequence called Rev responsive element (RRE) located in the env gene, that is not present in fully spliced viral mRNAs (early transcripts). This function is essential since most viral proteins are translated from unspliced or partially spliced pre-mRNAs which cannot exit the nucleus by the pathway used by fully processed cellular mRNAs. Rev itself is translated from a fully spliced mRNA that readily exits the nucleus. Rev's nuclear localization signal (NLS) binds directly to KPNB1/Importin beta-1 without previous binding to KPNA1/Importin alpha-1. KPNB1 binds to the GDP bound form of RAN (Ran-GDP) and targets Rev to the nucleus. In the nucleus, the conversion from Ran-GDP to Ran-GTP dissociates Rev from KPNB1 and allows Rev's binding to the RRE in viral pre-mRNAs. Rev multimerization on the RRE via cooperative assembly exposes its nuclear export signal (NES) to the surface. Rev can then form a complex with XPO1/CRM1 and Ran-GTP, leading to nuclear export of the complex. Conversion from Ran-GTP to Ran-GDP mediates dissociation of the Rev/RRE/XPO1/RAN complex, so that Rev can return to the nucleus for a subsequent round of export. Beside KPNB1, also seems to interact with TNPO1/Transportin-1, RANBP5/IPO5 and IPO7/RANBP7 for nuclear import. The nucleoporin-like HRB/RIP is an essential cofactor that probably indirectly interacts with Rev to release HIV RNAs from the perinuclear region to the cytoplasm. In Human immunodeficiency virus type 1 group M subtype F2 (isolate MP257) (HIV-1), this protein is Protein Rev.